Consider the following 245-residue polypeptide: 1-(5-phosphoribosyl)-5-[(5-phosphoribosylamino)methylideneamino] imidazole-4-carboxamide isomerase (245 aa).

Asp-7 acts as the Proton acceptor in catalysis. Catalysis depends on Asp-129, which acts as the Proton donor.

The protein belongs to the HisA/HisF family.

The protein resides in the cytoplasm. The enzyme catalyses 1-(5-phospho-beta-D-ribosyl)-5-[(5-phospho-beta-D-ribosylamino)methylideneamino]imidazole-4-carboxamide = 5-[(5-phospho-1-deoxy-D-ribulos-1-ylimino)methylamino]-1-(5-phospho-beta-D-ribosyl)imidazole-4-carboxamide. The protein operates within amino-acid biosynthesis; L-histidine biosynthesis; L-histidine from 5-phospho-alpha-D-ribose 1-diphosphate: step 4/9. The protein is 1-(5-phosphoribosyl)-5-[(5-phosphoribosylamino)methylideneamino] imidazole-4-carboxamide isomerase of Escherichia coli O81 (strain ED1a).